The sequence spans 88 residues: Small ribosomal subunit protein bS20 (88 aa).

Residues 1-23 (MPNTKSAEKALRVADANRQENRR) show a composition bias toward basic and acidic residues. Disordered stretches follow at residues 1-28 (MPNTKSAEKALRVADANRQENRRAKSQV) and 69-88 (PKNAARRKSRLMKKLNQAAK). Basic residues predominate over residues 71-81 (NAARRKSRLMK).

Belongs to the bacterial ribosomal protein bS20 family.

Functionally, binds directly to 16S ribosomal RNA. In Dehalococcoides mccartyi (strain ATCC BAA-2266 / KCTC 15142 / 195) (Dehalococcoides ethenogenes (strain 195)), this protein is Small ribosomal subunit protein bS20.